The sequence spans 318 residues: RNA polymerase II transcription factor B subunit 3 (318 aa).

The RING-type zinc finger occupies 13–54 (CPLCQADRYLNPNMKLLINPECYHKMCESCVDRIFTTGPAQC).

In terms of assembly, one of the nine subunits forming the core-TFIIH basal transcription factor. Also interacts with skp1 and with the mcs2-mcs6 complex.

Its subcellular location is the cytoplasm. The protein resides in the nucleus. Functionally, acts as a component of the general transcription and DNA repair factor IIH (TFIIH or factor B), which is essential for both basal and activated transcription, and is involved in nucleotide excision repair (NER) of damaged DNA. TFIIH has CTD kinase activity and DNA-dependent ATPase activity, and is essential for polymerase II transcription. The protein is RNA polymerase II transcription factor B subunit 3 (pmh1) of Schizosaccharomyces pombe (strain 972 / ATCC 24843) (Fission yeast).